The following is a 571-amino-acid chain: Gag-Pro polyprotein (571 aa).

The N-myristoyl glycine; by host moiety is linked to residue Gly2. Residues 100-103 (PPPY) carry the PPXY motif motif. 2 repeats span residues 342–362 (PPPG…DCPT) and 367–387 (PPPG…DCPT). CCHC-type zinc fingers lie at residues 345–362 (GPCY…DCPT) and 370–387 (GPCP…DCPT). Residues 447 to 525 (ALMLVDTGAE…DKWQILGRDV (79 aa)) enclose the Peptidase A2 domain. Asp452 serves as the catalytic Protease; shared with dimeric partner.

Homodimer; the homodimers are part of the immature particles. Interacts with human TSG101 and NEDD4; these interactions are essential for budding and release of viral particles. In terms of assembly, homodimer; further assembles as homohexamers. Post-translationally, specific enzymatic cleavages by the viral protease yield mature proteins. The polyprotein is cleaved during and after budding, this process is termed maturation. The protease is autoproteolytically processed at its N- and C-termini. In terms of processing, gag polyprotein: Myristoylated. Myristoylation of the matrix (MA) domain mediates the transport and binding of Gag polyproteins to the host plasma membrane and is required for the assembly of viral particles.

It localises to the virion. In terms of biological role, the matrix domain targets Gag, Gag-Pro and Gag-Pro-Pol polyproteins to the plasma membrane via a multipartite membrane binding signal, that includes its myristoylated N-terminus. Its function is as follows. Matrix protein. Forms the spherical core of the virus that encapsulates the genomic RNA-nucleocapsid complex. Functionally, binds strongly to viral nucleic acids and promote their aggregation. Also destabilizes the nucleic acids duplexes via highly structured zinc-binding motifs. In terms of biological role, the aspartyl protease mediates proteolytic cleavages of Gag and Gag-Pol polyproteins during or shortly after the release of the virion from the plasma membrane. Cleavages take place as an ordered, step-wise cascade to yield mature proteins. This process is called maturation. Displays maximal activity during the budding process just prior to particle release from the cell. This chain is Gag-Pro polyprotein, found in Bos taurus (Bovine).